The sequence spans 751 residues: WD repeat-containing protein 91 (751 aa).

A coiled-coil region spans residues 188-212 (IQEENESLRHKLFALQAESSRMKKE). Positions 264–395 (LSQSKKGPAR…ASSTESVGVR (132 aa)) are disordered. Residues 278 to 287 (SGASPTQTGS) are compositionally biased toward polar residues. The span at 334–346 (RLQEHGKERRELL) shows a compositional bias: basic and acidic residues. Polar residues predominate over residues 377 to 391 (QAETSTKMPASSTES). WD repeat units follow at residues 410-449 (EHHS…QTKA), 452-492 (ISKS…NLCE), 497-559 (EDMP…QQLQ), 564-603 (PEPI…CAMS), 606-645 (AHDG…LKIS), 668-706 (VQFP…KVLE), and 713-751 (GHRA…AQKS).

Belongs to the WD repeat WDR91 family.

It localises to the early endosome membrane. The protein resides in the late endosome membrane. Functionally, functions as a negative regulator of the PI3 kinase/PI3K activity associated with endosomal membranes. By modifying the phosphatidylinositol 3-phosphate/PtdInsP3 content of endosomal membranes may regulate endosome fusion, recycling, sorting and early to late endosome transport. This Gallus gallus (Chicken) protein is WD repeat-containing protein 91.